A 500-amino-acid chain; its full sequence is Lysine--tRNA ligase (500 aa).

2 residues coordinate Mg(2+): Glu-410 and Glu-417.

Belongs to the class-II aminoacyl-tRNA synthetase family. As to quaternary structure, homodimer. Requires Mg(2+) as cofactor.

The protein localises to the cytoplasm. The catalysed reaction is tRNA(Lys) + L-lysine + ATP = L-lysyl-tRNA(Lys) + AMP + diphosphate. In Pseudomonas fluorescens (strain ATCC BAA-477 / NRRL B-23932 / Pf-5), this protein is Lysine--tRNA ligase.